Reading from the N-terminus, the 270-residue chain is Formamidopyrimidine-DNA glycosylase (270 aa).

Residue Pro2 is the Schiff-base intermediate with DNA of the active site. Residue Glu3 is the Proton donor of the active site. The active-site Proton donor; for beta-elimination activity is the Lys58. Residues His91, Arg110, and Arg151 each coordinate DNA. The FPG-type zinc finger occupies 236–270 (FVYGRGGEFCKVCGSTLREIRLGQRASVYCPRCQR). The active-site Proton donor; for delta-elimination activity is Arg260.

This sequence belongs to the FPG family. Monomer. Zn(2+) is required as a cofactor.

The enzyme catalyses Hydrolysis of DNA containing ring-opened 7-methylguanine residues, releasing 2,6-diamino-4-hydroxy-5-(N-methyl)formamidopyrimidine.. It carries out the reaction 2'-deoxyribonucleotide-(2'-deoxyribose 5'-phosphate)-2'-deoxyribonucleotide-DNA = a 3'-end 2'-deoxyribonucleotide-(2,3-dehydro-2,3-deoxyribose 5'-phosphate)-DNA + a 5'-end 5'-phospho-2'-deoxyribonucleoside-DNA + H(+). Its function is as follows. Involved in base excision repair of DNA damaged by oxidation or by mutagenic agents. Acts as a DNA glycosylase that recognizes and removes damaged bases. Has a preference for oxidized purines, such as 7,8-dihydro-8-oxoguanine (8-oxoG). Has AP (apurinic/apyrimidinic) lyase activity and introduces nicks in the DNA strand. Cleaves the DNA backbone by beta-delta elimination to generate a single-strand break at the site of the removed base with both 3'- and 5'-phosphates. The chain is Formamidopyrimidine-DNA glycosylase from Pseudomonas aeruginosa (strain LESB58).